Here is a 582-residue protein sequence, read N- to C-terminus: Transcription factor tau subunit sfc6 (582 aa).

Residues 1–97 are disordered; sequence MGPKSKEYEN…SAKKQSSKGL (97 aa). The span at 18 to 39 shows a compositional bias: acidic residues; the sequence is EDNDDDGDFVLENVMSEEDIEI. Residues 63–87 are compositionally biased toward polar residues; sequence QPLTPSSSKGAGNEPKSQNSSTTRG. 3 WD repeats span residues 221–262, 268–314, and 326–369; these read TQFL…NFKS, HDWG…VKFH, and FNDS…ECPL.

In terms of assembly, component of the TFIIIC complex including sfc1, sfc3, sfc4, sfc6 and sfc7. The subunits are organized in two globular domains, tauA and tauB, connected by a proteolysis-sensitive and flexible linker. Interacts with sfc1, sfc3 and sfc4.

It is found in the nucleus. Its function is as follows. TFIIIC mediates tRNA and 5S RNA gene activation by binding to intragenic promoter elements. Upstream of the transcription start site, TFIIIC assembles the initiation complex TFIIIB-TFIIIC-tDNA, which is sufficient for RNA polymerase III recruitment and function. Part of the tauB domain of TFIIIC that binds boxB DNA promoter sites of tRNA and similar genes. Cooperates with sfc3 in DNA binding. Localizes to chromatin insulator sequence without recruiting RNA polymerase III and plays a role in nuclear organization. In Schizosaccharomyces pombe (strain 972 / ATCC 24843) (Fission yeast), this protein is Transcription factor tau subunit sfc6.